The following is a 340-amino-acid chain: HPr kinase/phosphorylase (340 aa).

Active-site residues include His-153 and Lys-174. Residue 168 to 175 coordinates ATP; the sequence is GRSGIGKS. Mg(2+) is bound at residue Ser-175. Catalysis depends on Asp-192, which acts as the Proton acceptor; for phosphorylation activity. Proton donor; for dephosphorylation activity. The interval 216–225 is important for the catalytic mechanism of both phosphorylation and dephosphorylation; the sequence is MEIRGLGIID. Glu-217 is a Mg(2+) binding site. The active site involves Arg-258. Residues 279–284 form an important for the catalytic mechanism of dephosphorylation region; sequence PIYPGK.

It belongs to the HPrK/P family. As to quaternary structure, homohexamer. Mg(2+) is required as a cofactor.

The catalysed reaction is [HPr protein]-L-serine + ATP = [HPr protein]-O-phospho-L-serine + ADP + H(+). It catalyses the reaction [HPr protein]-O-phospho-L-serine + phosphate + H(+) = [HPr protein]-L-serine + diphosphate. In terms of biological role, catalyzes the ATP- as well as the pyrophosphate-dependent phosphorylation of a specific serine residue in HPr, a phosphocarrier protein of the phosphoenolpyruvate-dependent sugar phosphotransferase system (PTS). HprK/P also catalyzes the pyrophosphate-producing, inorganic phosphate-dependent dephosphorylation (phosphorolysis) of seryl-phosphorylated HPr (P-Ser-HPr). This chain is HPr kinase/phosphorylase, found in Chloroherpeton thalassium (strain ATCC 35110 / GB-78).